Consider the following 246-residue polypeptide: Probable transcriptional regulatory protein ACP_0521 (246 aa).

The protein belongs to the TACO1 family.

Its subcellular location is the cytoplasm. The sequence is that of Probable transcriptional regulatory protein ACP_0521 from Acidobacterium capsulatum (strain ATCC 51196 / DSM 11244 / BCRC 80197 / JCM 7670 / NBRC 15755 / NCIMB 13165 / 161).